The sequence spans 285 residues: Golgi to ER traffic protein 2 (285 aa).

Basic and acidic residues predominate over residues 1 to 10 (MSELTEAEKR). Disordered regions lie at residues 1 to 72 (MSEL…KEDS) and 87 to 106 (MQGQ…PDLL). S2 carries the N-acetylserine modification. Residues 2 to 148 (SELTEAEKRR…LDYHDYLLNR (147 aa)) are Cytoplasmic-facing. Basic residues predominate over residues 11–20 (RLLRERRQKK). Positions 24-42 (GGASSRLNKITGQASSHLN) are enriched in polar residues. S45 bears the Phosphoserine mark. The span at 49–60 (APSAAKTTPPAS) shows a compositional bias: low complexity. Over residues 93–104 (GKSTPQDSSTPD) the composition is skewed to polar residues. Residues 149-169 (LKAWTILVKWVFFLLPYLYLI) traverse the membrane as a helical segment. Over 170–196 (TRPNSSVWPAYAFTQSAWFAPLRNPSN) the chain is Lumenal. N-linked (GlcNAc...) asparagine glycans are attached at residues N173 and N196. Residues 197 to 216 (FTRIFATFEFLSISIYYQLL) form a helical membrane-spanning segment. Residues 217–263 (KNVEHKSKIKNLQDTNKLVKLVSLVPEGVIPVANLKGKLITLLQYWD) are Cytoplasmic-facing. The chain crosses the membrane as a helical span at residues 264–284 (LLSMLITDISFVLIVLGLLTY). Residue L285 is a topological domain, lumenal.

It belongs to the GET2 family. Component of the Golgi to ER traffic (GET) complex, which is composed of GET1, GET2 and GET3. Within the complex, GET1 and GET2 form a heterotetramer which is stabilized by phosphatidylinositol binding and which binds to the GET3 homodimer.

It is found in the endoplasmic reticulum membrane. It localises to the golgi apparatus membrane. Functionally, required for the post-translational delivery of tail-anchored (TA) proteins to the endoplasmic reticulum. Together with GET1, acts as a membrane receptor for soluble GET3, which recognizes and selectively binds the transmembrane domain of TA proteins in the cytosol. The GET complex cooperates with the HDEL receptor ERD2 to mediate the ATP-dependent retrieval of resident ER proteins that contain a C-terminal H-D-E-L retention signal from the Golgi to the ER. Involved in DNA replication and DNA damage response and also in cell wall function. This Saccharomyces cerevisiae (strain RM11-1a) (Baker's yeast) protein is Golgi to ER traffic protein 2.